A 608-amino-acid chain; its full sequence is Chaperone protein HtpG (608 aa).

The a; substrate-binding stretch occupies residues 1-332 (MQFQTEVNQL…VEDLPLNVSR (332 aa)). The segment at 333 to 536 (EILQENQILK…KNKPDFAMQQ (204 aa)) is b. A c region spans residues 537–608 (LLKQMGQEQN…LTKIINKAFS (72 aa)).

Belongs to the heat shock protein 90 family. As to quaternary structure, homodimer.

The protein resides in the cytoplasm. Its function is as follows. Molecular chaperone. Has ATPase activity. The polypeptide is Chaperone protein HtpG (Campylobacter jejuni subsp. jejuni serotype O:2 (strain ATCC 700819 / NCTC 11168)).